We begin with the raw amino-acid sequence, 180 residues long: Large ribosomal subunit protein uL5 (180 aa).

The protein belongs to the universal ribosomal protein uL5 family. As to quaternary structure, part of the 50S ribosomal subunit; part of the 5S rRNA/L5/L18/L25 subcomplex. Contacts the 5S rRNA and the P site tRNA. Forms a bridge to the 30S subunit in the 70S ribosome.

This is one of the proteins that bind and probably mediate the attachment of the 5S RNA into the large ribosomal subunit, where it forms part of the central protuberance. In the 70S ribosome it contacts protein S13 of the 30S subunit (bridge B1b), connecting the 2 subunits; this bridge is implicated in subunit movement. Contacts the P site tRNA; the 5S rRNA and some of its associated proteins might help stabilize positioning of ribosome-bound tRNAs. The protein is Large ribosomal subunit protein uL5 of Synechocystis sp. (strain ATCC 27184 / PCC 6803 / Kazusa).